A 315-amino-acid polypeptide reads, in one-letter code: Glutamine synthetase nodule isozyme (315 aa).

The GS beta-grasp domain occupies 19–99 (IIAEYIWVGG…VICDTYTPSG (81 aa)). Residues 106-315 (KRHAAAKIFS…WGVANRGASI (210 aa)) form the GS catalytic domain.

This sequence belongs to the glutamine synthetase family. As to quaternary structure, homooctamer.

The protein resides in the cytoplasm. The catalysed reaction is L-glutamate + NH4(+) + ATP = L-glutamine + ADP + phosphate + H(+). The protein is Glutamine synthetase nodule isozyme of Lupinus angustifolius (Narrow-leaved blue lupine).